The following is a 282-amino-acid chain: Biotin synthase (282 aa).

A Radical SAM core domain is found at 1–228; it reads MQEIFLCSIS…NARLMVAGGR (228 aa). [4Fe-4S] cluster is bound by residues Cys17, Cys21, and Cys24. Residues Cys61, Cys96, Cys154, and Arg221 each coordinate [2Fe-2S] cluster.

The protein belongs to the radical SAM superfamily. Biotin synthase family. In terms of assembly, homodimer. [4Fe-4S] cluster is required as a cofactor. The cofactor is [2Fe-2S] cluster.

It carries out the reaction (4R,5S)-dethiobiotin + (sulfur carrier)-SH + 2 reduced [2Fe-2S]-[ferredoxin] + 2 S-adenosyl-L-methionine = (sulfur carrier)-H + biotin + 2 5'-deoxyadenosine + 2 L-methionine + 2 oxidized [2Fe-2S]-[ferredoxin]. Its pathway is cofactor biosynthesis; biotin biosynthesis; biotin from 7,8-diaminononanoate: step 2/2. In terms of biological role, catalyzes the conversion of dethiobiotin (DTB) to biotin by the insertion of a sulfur atom into dethiobiotin via a radical-based mechanism. This Helicobacter pylori (strain P12) protein is Biotin synthase.